The sequence spans 290 residues: MIHGTTVWPSPAKLNLFLYITGRRANGYHDLQTLFQFLDHGDELTITANNSGNITLSPALADVALEDNLIYKAAMALKNAAQSPLGADIQLHKVLPMGGGIGGGSSNAATTLVALNYLWQTGLSDDQLAEIGLALGADVPVFTRGFAAFAEGVGEELSAVEPEEKWYLVVRPAVSIATKDIFTHPQLMRNTPKRDLASLLTTPYENDCEKIVRSLYPEVDKQLSWLLQYAPSRLTGTGSCVFAEFSSRKDAQAVFAQLSDNVLAFVAQGRNVSPLRKTLADYQSAKIRPY.

Residue lysine 13 is part of the active site. Residue 96 to 106 (PMGGGIGGGSS) coordinates ATP. Aspartate 138 is an active-site residue.

It belongs to the GHMP kinase family. IspE subfamily.

It carries out the reaction 4-CDP-2-C-methyl-D-erythritol + ATP = 4-CDP-2-C-methyl-D-erythritol 2-phosphate + ADP + H(+). It functions in the pathway isoprenoid biosynthesis; isopentenyl diphosphate biosynthesis via DXP pathway; isopentenyl diphosphate from 1-deoxy-D-xylulose 5-phosphate: step 3/6. In terms of biological role, catalyzes the phosphorylation of the position 2 hydroxy group of 4-diphosphocytidyl-2C-methyl-D-erythritol. The chain is 4-diphosphocytidyl-2-C-methyl-D-erythritol kinase from Vibrio cholerae serotype O1 (strain ATCC 39541 / Classical Ogawa 395 / O395).